Reading from the N-terminus, the 456-residue chain is Enolase (456 aa).

Residue Q167 coordinates (2R)-2-phosphoglycerate. The Proton donor role is filled by E209. Positions 250, 312, and 339 each coordinate Mg(2+). (2R)-2-phosphoglycerate contacts are provided by K364, R393, S394, and K415. Catalysis depends on K364, which acts as the Proton acceptor.

Belongs to the enolase family. Requires Mg(2+) as cofactor.

The protein localises to the cytoplasm. Its subcellular location is the secreted. The protein resides in the cell surface. The catalysed reaction is (2R)-2-phosphoglycerate = phosphoenolpyruvate + H2O. It functions in the pathway carbohydrate degradation; glycolysis; pyruvate from D-glyceraldehyde 3-phosphate: step 4/5. In terms of biological role, catalyzes the reversible conversion of 2-phosphoglycerate (2-PG) into phosphoenolpyruvate (PEP). It is essential for the degradation of carbohydrates via glycolysis. The chain is Enolase from Mycoplasmopsis pulmonis (strain UAB CTIP) (Mycoplasma pulmonis).